The chain runs to 368 residues: 7,8-didemethyl-8-hydroxy-5-deazariboflavin synthase (368 aa).

In terms of domain architecture, Radical SAM core spans 36 to 272; that stretch reads LSYCRNVFLP…EEVSVQVPPN (237 aa). The [4Fe-4S] cluster site is built by Cys50, Cys54, and Cys57.

It belongs to the radical SAM superfamily. CofG family. Consists of two subunits, CofG and CofH. Requires [4Fe-4S] cluster as cofactor.

It catalyses the reaction 5-amino-5-(4-hydroxybenzyl)-6-(D-ribitylimino)-5,6-dihydrouracil + S-adenosyl-L-methionine = 7,8-didemethyl-8-hydroxy-5-deazariboflavin + 5'-deoxyadenosine + L-methionine + NH4(+) + H(+). It functions in the pathway cofactor biosynthesis; coenzyme F0 biosynthesis. Functionally, catalyzes the radical-mediated synthesis of 7,8-didemethyl-8-hydroxy-5-deazariboflavin from 5-amino-5-(4-hydroxybenzyl)-6-(D-ribitylimino)-5,6-dihydrouracil. This Haloarcula marismortui (strain ATCC 43049 / DSM 3752 / JCM 8966 / VKM B-1809) (Halobacterium marismortui) protein is 7,8-didemethyl-8-hydroxy-5-deazariboflavin synthase.